The primary structure comprises 427 residues: UDP-N-acetylglucosamine 1-carboxyvinyltransferase (427 aa).

Position 22–23 (22–23) interacts with phosphoenolpyruvate; sequence KN. A UDP-N-acetyl-alpha-D-glucosamine-binding site is contributed by Arg-92. Asp-116 functions as the Proton donor in the catalytic mechanism. Positions 312 and 334 each coordinate UDP-N-acetyl-alpha-D-glucosamine.

This sequence belongs to the EPSP synthase family. MurA subfamily.

It localises to the cytoplasm. The catalysed reaction is phosphoenolpyruvate + UDP-N-acetyl-alpha-D-glucosamine = UDP-N-acetyl-3-O-(1-carboxyvinyl)-alpha-D-glucosamine + phosphate. It participates in cell wall biogenesis; peptidoglycan biosynthesis. In terms of biological role, cell wall formation. Adds enolpyruvyl to UDP-N-acetylglucosamine. The sequence is that of UDP-N-acetylglucosamine 1-carboxyvinyltransferase from Borrelia garinii subsp. bavariensis (strain ATCC BAA-2496 / DSM 23469 / PBi) (Borreliella bavariensis).